Reading from the N-terminus, the 574-residue chain is K(+)/H(+) antiporter NhaP2 (574 aa).

Helical transmembrane passes span 6–26, 30–50, 58–78, 87–107, 109–129, 173–193, 196–216, 219–239, 242–262, 271–291, 299–319, 335–355, and 359–379; these read INSFFLIGALLAAVSVLLSPM, LGIPILLIFLAVGILAGEDGL, YSTAYLVSNLALAIILLDGGM, VALWPALSLATFGVAITTSIT, LMAAWLFDLHWLQGLLVGAIV, IAILANVDTELSVSFMLVSFI, FGLGICLGLGGGWLLWKLVNL, LAEGLYSILVLSGGLIIYAVS, LGGSGILSIYLVGLFLGNKPT, VLDGMTWVSQIGMFLVLGLLL, ILLPGFALAFGMILFARPLAV, WFISWVGLRGAVPIILAVFPM, and LPGAQLYFNLAFFVVLVSLLI. The 82-residue stretch at 405-486 folds into the RCK C-terminal domain; sequence SGVEIYPSSE…LDALSHLFSQ (82 aa).

It belongs to the monovalent cation:proton antiporter 1 (CPA1) transporter (TC 2.A.36) family. NhaP2 subfamily.

It localises to the cell inner membrane. It catalyses the reaction K(+)(in) + H(+)(out) = K(+)(out) + H(+)(in). K(+)/H(+) antiporter that extrudes potassium in exchange for external protons and maintains the internal concentration of potassium under toxic levels. This is K(+)/H(+) antiporter NhaP2 from Shewanella sp. (strain W3-18-1).